The sequence spans 857 residues: Catalase-peroxidase (857 aa).

Positions 207–330 (WHSAGTYRVS…LAAVQMGLIY (124 aa)) form a cross-link, tryptophyl-tyrosyl-methioninium (Trp-Tyr) (with M-356). Histidine 208 functions as the Proton acceptor in the catalytic mechanism. Residues 330 to 356 (YVNPEGPNGKPDPIAAAKDIRETFGRM) constitute a cross-link (tryptophyl-tyrosyl-methioninium (Tyr-Met) (with W-207)). Heme b is bound at residue histidine 371.

It belongs to the peroxidase family. Peroxidase/catalase subfamily. Homodimer or homotetramer. Requires heme b as cofactor. Post-translationally, formation of the three residue Trp-Tyr-Met cross-link is important for the catalase, but not the peroxidase activity of the enzyme.

The catalysed reaction is H2O2 + AH2 = A + 2 H2O. It catalyses the reaction 2 H2O2 = O2 + 2 H2O. In terms of biological role, bifunctional enzyme with both catalase and broad-spectrum peroxidase activity. This is Catalase-peroxidase from Rhodopirellula baltica (strain DSM 10527 / NCIMB 13988 / SH1).